The sequence spans 33 residues: Brevinin-2DYb (33 aa).

Cys27 and Cys33 form a disulfide bridge.

Expressed by the skin glands.

Its subcellular location is the secreted. Functionally, antimicrobial peptide. Active against the Gram-positive bacterium S.aureus (MIC=30 uM) and the Gram-negative bacterium E.coli (MIC=30 uM). The protein is Brevinin-2DYb of Rana dybowskii (Dybovsky's frog).